Consider the following 181-residue polypeptide: Shikimate kinase (181 aa).

Residue 17 to 22 participates in ATP binding; sequence GAGKTT. Thr-21 contributes to the Mg(2+) binding site. Positions 39, 63, and 85 each coordinate substrate. An ATP-binding site is contributed by Arg-122. Arg-141 is a binding site for substrate.

It belongs to the shikimate kinase family. Monomer. It depends on Mg(2+) as a cofactor.

Its subcellular location is the cytoplasm. The catalysed reaction is shikimate + ATP = 3-phosphoshikimate + ADP + H(+). The protein operates within metabolic intermediate biosynthesis; chorismate biosynthesis; chorismate from D-erythrose 4-phosphate and phosphoenolpyruvate: step 5/7. Catalyzes the specific phosphorylation of the 3-hydroxyl group of shikimic acid using ATP as a cosubstrate. The protein is Shikimate kinase of Nostoc sp. (strain PCC 7120 / SAG 25.82 / UTEX 2576).